Here is a 520-residue protein sequence, read N- to C-terminus: Laccase (520 aa).

The first 21 residues, 1-21, serve as a signal peptide directing secretion; the sequence is MHTFLRSTALVVAGLSARALA. Plastocyanin-like domains lie at 22 to 148 and 160 to 304; these read SIGP…FVVY and VDDD…ILRY. A glycan (N-linked (GlcNAc...) asparagine) is linked at Asn75. Residues His85, His87, His130, and His132 each contribute to the Cu cation site. 2 cysteine pairs are disulfide-bonded: Cys106-Cys509 and Cys138-Cys227. Residues Asn352 and Asn402 are each glycosylated (N-linked (GlcNAc...) asparagine). The 124-residue stretch at 373–496 folds into the Plastocyanin-like 3 domain; the sequence is TVPVLLQILS…VFAEDIPDVA (124 aa). Residues His418, His421, His423, His473, Cys474, His475, and His479 each contribute to the Cu cation site.

The protein belongs to the multicopper oxidase family. Cu cation serves as cofactor.

It is found in the secreted. The enzyme catalyses 4 hydroquinone + O2 = 4 benzosemiquinone + 2 H2O. Lignin degradation and detoxification of lignin-derived products. The polypeptide is Laccase (LAC) (Phlebia radiata (White-rot fungus)).